The primary structure comprises 214 residues: Orotate phosphoribosyltransferase (214 aa).

Residue lysine 26 participates in 5-phospho-alpha-D-ribose 1-diphosphate binding. 34–35 (FF) lines the orotate pocket. Residues 72 to 73 (YK), arginine 99, lysine 100, lysine 103, histidine 105, and 124 to 132 (DDVITAGTA) each bind 5-phospho-alpha-D-ribose 1-diphosphate. Threonine 128 and arginine 156 together coordinate orotate.

The protein belongs to the purine/pyrimidine phosphoribosyltransferase family. PyrE subfamily. Homodimer. It depends on Mg(2+) as a cofactor.

The catalysed reaction is orotidine 5'-phosphate + diphosphate = orotate + 5-phospho-alpha-D-ribose 1-diphosphate. The protein operates within pyrimidine metabolism; UMP biosynthesis via de novo pathway; UMP from orotate: step 1/2. Catalyzes the transfer of a ribosyl phosphate group from 5-phosphoribose 1-diphosphate to orotate, leading to the formation of orotidine monophosphate (OMP). This Actinobacillus succinogenes (strain ATCC 55618 / DSM 22257 / CCUG 43843 / 130Z) protein is Orotate phosphoribosyltransferase.